The following is a 125-amino-acid chain: Protein ApaG (125 aa).

Residues 1 to 125 (MIDAPRIIVQ…FRLAIPSLIN (125 aa)) form the ApaG domain.

This chain is Protein ApaG, found in Edwardsiella ictaluri (strain 93-146).